The following is a 155-amino-acid chain: Ribosomal RNA large subunit methyltransferase H (155 aa).

Residues Leu72, Gly103, and 122–127 (LSPLTL) each bind S-adenosyl-L-methionine.

The protein belongs to the RNA methyltransferase RlmH family. Homodimer.

The protein localises to the cytoplasm. The enzyme catalyses pseudouridine(1915) in 23S rRNA + S-adenosyl-L-methionine = N(3)-methylpseudouridine(1915) in 23S rRNA + S-adenosyl-L-homocysteine + H(+). Its function is as follows. Specifically methylates the pseudouridine at position 1915 (m3Psi1915) in 23S rRNA. The polypeptide is Ribosomal RNA large subunit methyltransferase H (Actinobacillus pleuropneumoniae serotype 5b (strain L20)).